Reading from the N-terminus, the 367-residue chain is GTP cyclohydrolase FolE2 (367 aa).

It belongs to the GTP cyclohydrolase IV family.

It catalyses the reaction GTP + H2O = 7,8-dihydroneopterin 3'-triphosphate + formate + H(+). Its pathway is cofactor biosynthesis; 7,8-dihydroneopterin triphosphate biosynthesis; 7,8-dihydroneopterin triphosphate from GTP: step 1/1. In terms of biological role, converts GTP to 7,8-dihydroneopterin triphosphate. This Roseobacter denitrificans (strain ATCC 33942 / OCh 114) (Erythrobacter sp. (strain OCh 114)) protein is GTP cyclohydrolase FolE2.